A 199-amino-acid chain; its full sequence is GTP-binding protein Di-Ras2 (199 aa).

GTP contacts are provided by residues 14–21 (GAGGVGKS), 33–39 (RESYIPT), 61–65 (DTTGS), and 121–124 (NKCD). Ser35 carries the post-translational modification Phosphoserine. The Effector region motif lies at 36-44 (YIPTVEDTY). Ser126 carries the post-translational modification Phosphoserine. 152 to 153 (AK) is a binding site for GTP. Cys196 is subject to Cysteine methyl ester. The S-geranylgeranyl cysteine moiety is linked to residue Cys196. Positions 197–199 (VIM) are cleaved as a propeptide — removed in mature form.

The protein belongs to the small GTPase superfamily. Di-Ras family. Ubiquitinated by the ECS(ASB11) complex via 'Lys-11'-linked ubiquitin chains, leading to its degradation by the proteasome.

It is found in the cell membrane. It carries out the reaction GTP + H2O = GDP + phosphate + H(+). Displays low GTPase activity and exists predominantly in the GTP-bound form. This Macaca fascicularis (Crab-eating macaque) protein is GTP-binding protein Di-Ras2 (DIRAS2).